A 671-amino-acid polypeptide reads, in one-letter code: Phosphoenolpyruvate carboxykinase (ATP) 1 (671 aa).

Positions 1-10 (MSAGNGNATN) are enriched in low complexity. The tract at residues 1 to 44 (MSAGNGNATNGDGGFSFPKGPVMPKITTGAAKRGSGVCHDDSGP) is disordered. N-acetylserine is present on serine 2. Serine 62 bears the Phosphoserine mark. Threonine 66 is modified (phosphothreonine). The segment at 100–127 (TRESGPKVVRGDPAEKKTDGSTTPAYAH) is disordered. Over residues 108-118 (VRGDPAEKKTD) the composition is skewed to basic and acidic residues. Position 189 (arginine 189) interacts with substrate. Ca(2+) contacts are provided by histidine 270 and asparagine 271. Residues tyrosine 328 and lysine 334 each coordinate substrate. Residues lysine 334, histidine 353, and 369–377 (GLSGTGKTT) contribute to the ATP site. Residues lysine 334 and histidine 353 each coordinate Mn(2+). Aspartate 390 contacts Mn(2+). Residue glycine 404 participates in Ca(2+) binding. ATP-binding positions include glutamate 418, arginine 455, 574–575 (RI), isoleucine 575, and threonine 580. Arginine 455 lines the substrate pocket.

It belongs to the phosphoenolpyruvate carboxykinase (ATP) family. As to quaternary structure, monomer. Requires Mn(2+) as cofactor. In terms of tissue distribution, expressed in cotyledons, flowers, siliques, seeds, leaves, stems and roots. Localized in mid-veins.

It localises to the cytoplasm. The enzyme catalyses oxaloacetate + ATP = phosphoenolpyruvate + ADP + CO2. The protein operates within carbohydrate biosynthesis; gluconeogenesis. Its activity is regulated as follows. Allosterically activated by calcium. It may represent the only case of a monomeric, allosteric enzyme. Involved in the gluconeogenesis. Catalyzes the conversion of oxaloacetate (OAA) to phosphoenolpyruvate (PEP) through direct phosphoryl transfer between the nucleoside triphosphate and OAA. The sequence is that of Phosphoenolpyruvate carboxykinase (ATP) 1 from Arabidopsis thaliana (Mouse-ear cress).